We begin with the raw amino-acid sequence, 438 residues long: Transposon Ty2-LR2 Gag polyprotein (438 aa).

Composition is skewed to polar residues over residues 1 to 11 (MESQQLHQNPH), 19 to 39 (ASVTSKEVPSNQDPLAVSASN), and 49 to 60 (KVNSQEETTPGT). Disordered stretches follow at residues 1–88 (MESQ…YQQH), 364–397 (KNVSRTSPNTTNTKVTTRNYHRTNSSKPRAAKAH), and 418–438 (VSSQYLSDDNELSLRPATERI). Residues 295-397 (ENNINVSDRL…SSKPRAAKAH (103 aa)) form an RNA-binding region. The span at 369–381 (TSPNTTNTKVTTR) shows a compositional bias: low complexity.

Homotrimer.

The protein resides in the cytoplasm. Its function is as follows. Capsid protein (CA) is the structural component of the virus-like particle (VLP), forming the shell that encapsulates the retrotransposons dimeric RNA genome. The particles are assembled from trimer-clustered units and there are holes in the capsid shells that allow for the diffusion of macromolecules. CA also has nucleocapsid-like chaperone activity, promoting primer tRNA(i)-Met annealing to the multipartite primer-binding site (PBS), dimerization of Ty2 RNA and initiation of reverse transcription. The chain is Transposon Ty2-LR2 Gag polyprotein (TY2A-LR2) from Saccharomyces cerevisiae (strain ATCC 204508 / S288c) (Baker's yeast).